The primary structure comprises 455 residues: N-acetyl-S-(2-succino)cysteine lyase (455 aa).

106–107 provides a ligand contact to fumarate; that stretch reads TT. Catalysis depends on His-154, which acts as the Proton donor/acceptor. Arg-233 serves as a coordination point for fumarate. Ser-277 (proton donor/acceptor) is an active-site residue. Fumarate-binding positions include Ser-278 and 283–285; that span reads KRN.

It belongs to the lyase 1 family.

It carries out the reaction N-acetyl-S-(2-succino)-L-cysteine = N-acetyl-L-cysteine + fumarate. It functions in the pathway amino-acid biosynthesis; L-cysteine biosynthesis. Its function is as follows. Catalyzes the cleavage of N-acetyl-S-(2-succino)cysteine into fumarate and N-acetylcysteine. Is involved in a S-(2-succino)cysteine (2SC) degradation pathway that allows the bacterium to recover cysteine from 2SC and to detoxify 2SC that may be a toxic metabolite. Can also perform the reverse reaction in vitro, and has minor activity against 2SC and other small molecule thiols. This chain is N-acetyl-S-(2-succino)cysteine lyase, found in Enterococcus italicus (strain DSM 15952 / CCUG 50447 / LMG 22039 / TP 1.5).